We begin with the raw amino-acid sequence, 438 residues long: Metacaspase-1B (438 aa).

Positions 1–125 (MYYHHSHQGW…SQHFGRGAPS (125 aa)) are disordered. Low complexity predominate over residues 29–38 (PYPYSSNAQY). Residues 39–74 (QPPPGPPPTSHYAPPPGPPPSHYYPPPGSYPSPAPS) show a composition bias toward pro residues. Active-site residues include His-222 and Cys-278.

Belongs to the peptidase C14B family.

In terms of biological role, involved in cell death (apoptosis). The chain is Metacaspase-1B (casB) from Aspergillus niger (strain ATCC MYA-4892 / CBS 513.88 / FGSC A1513).